The sequence spans 262 residues: NAD-dependent glucose-6-phosphate dehydrogenase (262 aa).

Asn90, Ser115, Tyr152, and Lys156 together coordinate NAD(+). The active-site Proton acceptor is Tyr152.

The protein belongs to the NAD(P)-dependent epimerase/dehydratase family. As to quaternary structure, homodimer.

The catalysed reaction is D-glucose 6-phosphate + NAD(+) = 6-phospho-D-glucono-1,5-lactone + NADH + H(+). The protein operates within carbohydrate degradation; pentose phosphate pathway. In terms of biological role, catalyzes the NAD-dependent oxidation of glucose 6-phosphate to 6-phosphogluconolactone. This Haloferax volcanii (strain ATCC 29605 / DSM 3757 / JCM 8879 / NBRC 14742 / NCIMB 2012 / VKM B-1768 / DS2) (Halobacterium volcanii) protein is NAD-dependent glucose-6-phosphate dehydrogenase.